A 254-amino-acid chain; its full sequence is Nickel import ATP-binding protein NikD (254 aa).

Positions 2–241 constitute an ABC transporter domain; the sequence is PQQIELRNIT…PKHTVTRSLV (240 aa). ATP is bound at residue 36-43; it reads GGSGSGKS.

Belongs to the ABC transporter superfamily. Nickel importer (TC 3.A.1.5.3) family. As to quaternary structure, the complex is composed of two ATP-binding proteins (NikD and NikE), two transmembrane proteins (NikB and NikC) and a solute-binding protein (NikA).

The protein resides in the cell inner membrane. It catalyses the reaction Ni(2+)(out) + ATP + H2O = Ni(2+)(in) + ADP + phosphate + H(+). Part of the ABC transporter complex NikABCDE involved in nickel import. Responsible for energy coupling to the transport system. The chain is Nickel import ATP-binding protein NikD from Shigella flexneri.